The sequence spans 267 residues: MAAPPASSSAREEFVYLAKLAEQAERYEEMVEFMEKVAEAVDKDELTVEERNLLSVAYKNVIGARRASWRIISSIEQKEESRGNDDHVTTIRDYRSKIESELSKICDGILKLLDTRLVPASANGDSKVFYLKMKGDYHRYLAEFKTGQERKDAAEHTLTAYKAAQDIANAELAPTHPIRLGLALNFSVFYYEILNSPDRACNLAKQAFDEAIAELDTLGEESYKDSTLIMQLLRDNLTLWTSDMQDESPEEIKEAAAPKPAEEQKEI.

Position 2 is an N-acetylalanine (Ala-2). Phosphoserine is present on residues Ser-73 and Ser-196. The residue at position 217 (Thr-217) is a Phosphothreonine. Positions 244–267 are disordered; sequence MQDESPEEIKEAAAPKPAEEQKEI. A Phosphoserine modification is found at Ser-248. Basic and acidic residues predominate over residues 250-267; it reads EEIKEAAAPKPAEEQKEI.

This sequence belongs to the 14-3-3 family. As to quaternary structure, interacts with FD. Interacts with CINV1.

It is found in the nucleus. It localises to the cytoplasm. Is associated with a DNA binding complex that binds to the G box, a well-characterized cis-acting DNA regulatory element found in plant genes. This is 14-3-3-like protein GF14 phi (GRF4) from Arabidopsis thaliana (Mouse-ear cress).